The sequence spans 490 residues: C-type lectin domain family 14 member A (490 aa).

The first 21 residues, 1-21, serve as a signal peptide directing secretion; it reads MRPAFALCLLWQALWPGPGGG. The Extracellular segment spans residues 22-397; that stretch reads EHPTADRAGC…TPQAFDSSSA (376 aa). In terms of domain architecture, C-type lectin spans 33–173; the sequence is ASGACYSLHH…LRANGYLCKY (141 aa). C143 and C162 are joined by a disulfide. Residue N189 is glycosylated (N-linked (GlcNAc...) asparagine). The EGF-like domain maps to 245-287; it reads PCPGRYLRAGKCAELPNCLDDLGGFACECATGFELGKDGRSCV. Residues 286 to 349 are disordered; the sequence is CVTSGEGQPT…VTSIPEIPRW (64 aa). The span at 301–315 shows a compositional bias: low complexity; the sequence is VPTRRPPATATSPVP. N-linked (GlcNAc...) asparagine glycosylation occurs at N381. Residues 398–418 traverse the membrane as a helical segment; that stretch reads VVFIFVSTAVVVLVILTMTVL. Over 419 to 490 the chain is Cytoplasmic; that stretch reads GLVKLCFHES…AESPLGSSDA (72 aa). Residues 428–461 are disordered; it reads SPSSQPRKESMGPPGLESDPEPAALGSSSAHCTN.

It is found in the membrane. This is C-type lectin domain family 14 member A (CLEC14A) from Homo sapiens (Human).